Consider the following 207-residue polypeptide: Large ribosomal subunit protein uL4 (207 aa).

Positions 50-75 are disordered; it reads KTKTRSEVAGSGKKPFKQKGTGNARQ.

The protein belongs to the universal ribosomal protein uL4 family. Part of the 50S ribosomal subunit.

In terms of biological role, one of the primary rRNA binding proteins, this protein initially binds near the 5'-end of the 23S rRNA. It is important during the early stages of 50S assembly. It makes multiple contacts with different domains of the 23S rRNA in the assembled 50S subunit and ribosome. Forms part of the polypeptide exit tunnel. The chain is Large ribosomal subunit protein uL4 from Pelobacter propionicus (strain DSM 2379 / NBRC 103807 / OttBd1).